We begin with the raw amino-acid sequence, 266 residues long: MAIHLYKTSTPSTRNGTVDSQVKSNPRNNLIYGQHHCGKGRNARGIITARHRGGGHKRLYRKIDFRRNEKDIYGRIVTIEYDPNRNAYICLIHYGDGEKRYILHPRGAIIGDTIVSGTEVPIKMGNALPLTDMPLGTAIHNIEITLGKGGQLARAAGAVAKLIAKEGKSATLKLPSGEVRSISKNCSATVGQVGNVGVNQKSLGRAGSKRWLGKRPVVRGVVMNPVDHPMGVVKGEPQLVEKNPQPLGVILHLEEEVEKGINIVII.

The segment at 1-24 (MAIHLYKTSTPSTRNGTVDSQVKS) is disordered. Residues 7 to 24 (KTSTPSTRNGTVDSQVKS) are compositionally biased toward polar residues.

This sequence belongs to the universal ribosomal protein uL2 family. Part of the 50S ribosomal subunit.

It is found in the plastid. The protein resides in the chloroplast. In Nicotiana debneyi (Debney's tobacco), this protein is Large ribosomal subunit protein uL2c (rpl2).